Consider the following 469-residue polypeptide: Argininosuccinate lyase (469 aa).

This sequence belongs to the lyase 1 family. Argininosuccinate lyase subfamily.

The protein resides in the cytoplasm. The catalysed reaction is 2-(N(omega)-L-arginino)succinate = fumarate + L-arginine. It functions in the pathway amino-acid biosynthesis; L-arginine biosynthesis; L-arginine from L-ornithine and carbamoyl phosphate: step 3/3. This is Argininosuccinate lyase from Cupriavidus metallidurans (strain ATCC 43123 / DSM 2839 / NBRC 102507 / CH34) (Ralstonia metallidurans).